We begin with the raw amino-acid sequence, 499 residues long: Apolipoprotein N-acyltransferase (499 aa).

Transmembrane regions (helical) follow at residues 9 to 29 (LLLG…PALL), 50 to 70 (LGYI…SIGV), 77 to 97 (FWWA…FFVS), 114 to 134 (FIFC…FTGL), 148 to 168 (ILIQ…VIYI), and 183 to 203 (LKVL…YGSV). Positions 220–464 (VQPSIPQTEK…DGLIPKKLDS (245 aa)) constitute a CN hydrolase domain. Residue Glu259 is the Proton acceptor of the active site. Residue Lys322 is part of the active site. Catalysis depends on Cys372, which acts as the Nucleophile. The chain crosses the membrane as a helical span at residues 466–486 (TIFSKFGNITILLIVFFIFLV).

It belongs to the CN hydrolase family. Apolipoprotein N-acyltransferase subfamily.

The protein resides in the cell inner membrane. The enzyme catalyses N-terminal S-1,2-diacyl-sn-glyceryl-L-cysteinyl-[lipoprotein] + a glycerophospholipid = N-acyl-S-1,2-diacyl-sn-glyceryl-L-cysteinyl-[lipoprotein] + a 2-acyl-sn-glycero-3-phospholipid + H(+). It functions in the pathway protein modification; lipoprotein biosynthesis (N-acyl transfer). In terms of biological role, catalyzes the phospholipid dependent N-acylation of the N-terminal cysteine of apolipoprotein, the last step in lipoprotein maturation. The chain is Apolipoprotein N-acyltransferase from Rickettsia bellii (strain RML369-C).